The primary structure comprises 305 residues: Oxygen-dependent coproporphyrinogen-III oxidase (305 aa).

Residue Ser98 coordinates substrate. A divalent metal cation-binding residues include His102 and His112. Catalysis depends on His112, which acts as the Proton donor. 114–116 provides a ligand contact to substrate; that stretch reads NVR. A divalent metal cation contacts are provided by His151 and His181. The interval 246–281 is important for dimerization; sequence YVEFNLVYDRGTLFGLQSGGRTESILMSMPPLARWE. Position 264 to 266 (264 to 266) interacts with substrate; that stretch reads GGR.

It belongs to the aerobic coproporphyrinogen-III oxidase family. In terms of assembly, homodimer. A divalent metal cation serves as cofactor.

It localises to the cytoplasm. It catalyses the reaction coproporphyrinogen III + O2 + 2 H(+) = protoporphyrinogen IX + 2 CO2 + 2 H2O. It participates in porphyrin-containing compound metabolism; protoporphyrin-IX biosynthesis; protoporphyrinogen-IX from coproporphyrinogen-III (O2 route): step 1/1. Involved in the heme biosynthesis. Catalyzes the aerobic oxidative decarboxylation of propionate groups of rings A and B of coproporphyrinogen-III to yield the vinyl groups in protoporphyrinogen-IX. In Vibrio parahaemolyticus serotype O3:K6 (strain RIMD 2210633), this protein is Oxygen-dependent coproporphyrinogen-III oxidase.